The following is a 270-amino-acid chain: Tetraspanin-18 (270 aa).

Residues 1–15 (MRRNCCHVSFASTLK) lie on the Cytoplasmic side of the membrane. Residues 16–36 (ILNFVQAFIGVSIIIYSIWML) traverse the membrane as a helical segment. At 37 to 99 (HEYSRHLPVD…LRSLDLPAPW (63 aa)) the chain is on the extracellular side. The helical transmembrane segment at 100–120 (FIYSFMAVGILVCIVTFIGFI) threads the bilayer. Residues 121–132 (AAEAINGCCLCF) are Cytoplasmic-facing. Residues 133-153 (YSILKTLLILLEAALVAYIAI) traverse the membrane as a helical segment. The Extracellular portion of the chain corresponds to 154–183 (DRHWEKDLPYDPTGELSSLRAFIEENIDIC). Residues 184 to 204 (KWVGIAVVAVQLLSLLLAMVL) form a helical membrane-spanning segment. Residues 205–270 (RAMVSTPKPE…NQSPPVNPKG (66 aa)) are Cytoplasmic-facing. The segment at 212 to 249 (KPELDEEEDDENPRSRTWDPLLGPQGNQAPAGSSKIEN) is disordered. Residues 236–249 (QGNQAPAGSSKIEN) are compositionally biased toward polar residues. The residue at position 245 (Ser245) is a Phosphoserine.

The protein belongs to the tetraspanin (TM4SF) family. Homodimer. Constituent of tobamovirus replication complex. Expressed in rosette leaves.

The protein localises to the membrane. The protein resides in the vacuole membrane. Functionally, may be involved in the regulation of cell differentiation. In terms of biological role, promotes intracellular multiplication of tobamoviruses, probably being a component of the replication complex. The sequence is that of Tetraspanin-18 (TOM2AH2) from Arabidopsis thaliana (Mouse-ear cress).